A 149-amino-acid chain; its full sequence is Low molecular weight protein-tyrosine-phosphatase Wzb (149 aa).

Cys-9 serves as the catalytic Nucleophile. Arg-15 is a catalytic residue. Asp-115 serves as the catalytic Proton donor.

The protein belongs to the low molecular weight phosphotyrosine protein phosphatase family.

It carries out the reaction O-phospho-L-tyrosyl-[protein] + H2O = L-tyrosyl-[protein] + phosphate. The protein operates within glycan metabolism; exopolysaccharide biosynthesis. Dephosphorylates Wzc. Required for the extracellular polysaccharide colanic acid synthesis. Probably involved in the export of colanic acid from the cell to medium. Involved in protection of cells against contact-dependent growth inhibition (CDI). The protein is Low molecular weight protein-tyrosine-phosphatase Wzb (wzb) of Salmonella typhimurium (strain LT2 / SGSC1412 / ATCC 700720).